The sequence spans 476 residues: WD repeat, SAM and U-box domain-containing protein 1 (476 aa).

WD repeat units lie at residues 10-47 (DHGDDVNCCAFSFSLLATCSLDKTIRLYSLRDFTELPH), 52-91 (FHTYAVHCCCFSPSGHILASCSTDGTTVLWNTENGQMLAV), 95-134 (PSGSPVRVCQFSPDSTCLASGAADGTVVLWNAQSYKLYRC), 137-176 (VKDGSLAACAFSPNGSFFVTGSSCGDLTVWDDKMRCLHSE), 178-228 (AHDL…LGFE), 237-276 (GHCAPVLACAFSHDGQMLVSGSVDKSVIVYDTNTENILHT), and 279-318 (QHTRYVTTCAFAPNTLLLATGSMDKTVNIWQFDLETLCQA). The SAM domain occupies 332-396 (WSEEDVSTWL…LRKIEELRTK (65 aa)). One can recognise a U-box domain in the interval 403–476 (GIPDEFICPI…INRWLETHQK (74 aa)). Threonine 458 carries the phosphothreonine modification.

This is WD repeat, SAM and U-box domain-containing protein 1 (WDSUB1) from Homo sapiens (Human).